We begin with the raw amino-acid sequence, 128 residues long: Aspartate 1-decarboxylase (128 aa).

Ser25 acts as the Schiff-base intermediate with substrate; via pyruvic acid in catalysis. Ser25 carries the post-translational modification Pyruvic acid (Ser). Residue Thr57 coordinates substrate. The active-site Proton donor is Tyr58. 73–75 (GSA) contacts substrate.

Belongs to the PanD family. As to quaternary structure, heterooctamer of four alpha and four beta subunits. Pyruvate serves as cofactor. Post-translationally, is synthesized initially as an inactive proenzyme, which is activated by self-cleavage at a specific serine bond to produce a beta-subunit with a hydroxyl group at its C-terminus and an alpha-subunit with a pyruvoyl group at its N-terminus.

The protein resides in the cytoplasm. It carries out the reaction L-aspartate + H(+) = beta-alanine + CO2. The protein operates within cofactor biosynthesis; (R)-pantothenate biosynthesis; beta-alanine from L-aspartate: step 1/1. Catalyzes the pyruvoyl-dependent decarboxylation of aspartate to produce beta-alanine. The chain is Aspartate 1-decarboxylase from Paraburkholderia phymatum (strain DSM 17167 / CIP 108236 / LMG 21445 / STM815) (Burkholderia phymatum).